Consider the following 440-residue polypeptide: Light-independent protochlorophyllide reductase subunit B (440 aa).

[4Fe-4S] cluster is bound at residue D36. 427 to 428 (KD) contributes to the substrate binding site.

This sequence belongs to the ChlB/BchB/BchZ family. Protochlorophyllide reductase is composed of three subunits; ChlL, ChlN and ChlB. Forms a heterotetramer of two ChlB and two ChlN subunits. [4Fe-4S] cluster is required as a cofactor.

The protein resides in the plastid. Its subcellular location is the cyanelle. The catalysed reaction is chlorophyllide a + oxidized 2[4Fe-4S]-[ferredoxin] + 2 ADP + 2 phosphate = protochlorophyllide a + reduced 2[4Fe-4S]-[ferredoxin] + 2 ATP + 2 H2O. It functions in the pathway porphyrin-containing compound metabolism; chlorophyll biosynthesis (light-independent). Component of the dark-operative protochlorophyllide reductase (DPOR) that uses Mg-ATP and reduced ferredoxin to reduce ring D of protochlorophyllide (Pchlide) to form chlorophyllide a (Chlide). This reaction is light-independent. The NB-protein (ChlN-ChlB) is the catalytic component of the complex. The protein is Light-independent protochlorophyllide reductase subunit B of Cyanophora paradoxa.